The primary structure comprises 357 residues: Probable dual-specificity RNA methyltransferase RlmN (357 aa).

Catalysis depends on glutamate 95, which acts as the Proton acceptor. The 235-residue stretch at 106-340 (NRDRHTVCVS…VSVREEKGTD (235 aa)) folds into the Radical SAM core domain. An intrachain disulfide couples cysteine 113 to cysteine 345. 3 residues coordinate [4Fe-4S] cluster: cysteine 120, cysteine 124, and cysteine 127. Residues 172-173 (GE), serine 204, 227-229 (SLH), and asparagine 302 each bind S-adenosyl-L-methionine. The active-site S-methylcysteine intermediate is the cysteine 345.

The protein belongs to the radical SAM superfamily. RlmN family. It depends on [4Fe-4S] cluster as a cofactor.

Its subcellular location is the cytoplasm. It carries out the reaction adenosine(2503) in 23S rRNA + 2 reduced [2Fe-2S]-[ferredoxin] + 2 S-adenosyl-L-methionine = 2-methyladenosine(2503) in 23S rRNA + 5'-deoxyadenosine + L-methionine + 2 oxidized [2Fe-2S]-[ferredoxin] + S-adenosyl-L-homocysteine. The enzyme catalyses adenosine(37) in tRNA + 2 reduced [2Fe-2S]-[ferredoxin] + 2 S-adenosyl-L-methionine = 2-methyladenosine(37) in tRNA + 5'-deoxyadenosine + L-methionine + 2 oxidized [2Fe-2S]-[ferredoxin] + S-adenosyl-L-homocysteine. Functionally, specifically methylates position 2 of adenine 2503 in 23S rRNA and position 2 of adenine 37 in tRNAs. In Desulfitobacterium hafniense (strain Y51), this protein is Probable dual-specificity RNA methyltransferase RlmN.